The following is a 576-amino-acid chain: SNF1-like protein kinase ssp2 (576 aa).

One can recognise a Protein kinase domain in the interval 34-285 (YIIRETLGEG…IQEIRRDPWF (252 aa)). ATP-binding positions include 40 to 48 (LGEGSFGKV) and K63. D156 serves as the catalytic Proton acceptor. T189 is modified (phosphothreonine). The segment at 292–348 (YLRPMEEVQGSYADSRIVSKLGEAMGFSEDYIVEALRSDENNEVKEAYNLLHENQVI) is auto-inhibitory domain (AID). The 42-residue stretch at 304 to 345 (ADSRIVSKLGEAMGFSEDYIVEALRSDENNEVKEAYNLLHEN) folds into the UBA domain. Position 442 is a phosphoserine (S442).

The protein belongs to the protein kinase superfamily. CAMK Ser/Thr protein kinase family. SNF1 subfamily. As to quaternary structure, component of the AMP-activated protein kinase complex also known as the SNF1 kinase complex (Snf1c), a heterotrimeric complex composed of a catalytic subunit alpha and 2 regulatory subunits beta (amk2) and gamma (cbs2). Post-translationally, phosphorylation at Thr-189 by ssp1 is required for nuclear entry in nutritionally stressed cells.

It localises to the cytoplasm. It is found in the nucleus. The enzyme catalyses L-seryl-[protein] + ATP = O-phospho-L-seryl-[protein] + ADP + H(+). It carries out the reaction L-threonyl-[protein] + ATP = O-phospho-L-threonyl-[protein] + ADP + H(+). Its function is as follows. Serine/threonine protein kinase essential for release from glucose repression via the phosphorylation of scr1 upon glucose deprivation. Catalytic subunit of the AMP-activated protein kinase complex also known as the SNF1 kinase complex (Snf1c), a central regulator of cellular energy homeostasis, which, in response to a fall in intracellular ATP levels, activates energy-producing pathways and inhibits energy-consuming processes. The complex phosphorylates histone H3 to form H3S10ph, which promotes H3K14ac formation, leading to transcriptional activation through TBP recruitment to the promoters. Regulates proper cell cycle exit and sexual differentiation. Also regulates ste11 levels under nitrogen deprivation. The protein is SNF1-like protein kinase ssp2 of Schizosaccharomyces pombe (strain 972 / ATCC 24843) (Fission yeast).